The following is a 160-amino-acid chain: Cyclic pyranopterin monophosphate synthase (160 aa).

Residues 74-76 (LSH) and 112-113 (ME) each bind substrate. Residue Asp127 is part of the active site.

It belongs to the MoaC family. Homohexamer; trimer of dimers.

It catalyses the reaction (8S)-3',8-cyclo-7,8-dihydroguanosine 5'-triphosphate = cyclic pyranopterin phosphate + diphosphate. It functions in the pathway cofactor biosynthesis; molybdopterin biosynthesis. Its function is as follows. Catalyzes the conversion of (8S)-3',8-cyclo-7,8-dihydroguanosine 5'-triphosphate to cyclic pyranopterin monophosphate (cPMP). In Pelobacter propionicus (strain DSM 2379 / NBRC 103807 / OttBd1), this protein is Cyclic pyranopterin monophosphate synthase.